The chain runs to 834 residues: WW domain-containing adapter protein with coiled-coil homolog (834 aa).

3 disordered regions span residues 1-247 (MVMH…WSEH), 268-411 (KPKE…SVAT), and 430-504 (VTGA…GAKG). Residues 22-31 (HTSYQSSKYS) show a composition bias toward low complexity. Basic and acidic residues predominate over residues 33–50 (SKRDYERDRSSNYRDRDL). Positions 53–77 (GAGGGGGGGSAGGGGGGSGNGGGPL) are enriched in gly residues. Positions 96–108 (RSHDLRDRSDHRG) are enriched in basic and acidic residues. The segment covering 109-119 (GGGGNGRGGSG) has biased composition (gly residues). 3 stretches are compositionally biased toward basic and acidic residues: residues 127 to 168 (KMRD…DRRG), 181 to 246 (SSRE…DWSE), and 268 to 303 (KPKE…DRFS). One can recognise a WW domain in the interval 244–271 (WSEHVSSSGKMYYYNCKTEISQWEKPKE). Composition is skewed to polar residues over residues 304-314 (RSTYKHSNSSR) and 350-363 (GDST…YSLS). Residues 369–384 (HGGGPGGGGPGGGGGS) are compositionally biased toward gly residues. Composition is skewed to low complexity over residues 402 to 411 (TANSSASVAT) and 431 to 466 (TGAT…LRNS). Over residues 472–496 (GSTSGTTVPTLGSQDPHQHHLNSNA) the composition is skewed to polar residues.

Expressed in adult head and thorax and in larval central nervous system and fat body.

The protein resides in the nucleus. It localises to the lysosome. In terms of biological role, acts as a linker between gene transcription and histone H2B monoubiquitination at 'Lys-118'. Regulates the cell-cycle checkpoint activation in response to DNA damage. Positive regulator of amino acid starvation-induced autophagy. Also acts as a negative regulator of basal autophagy. Positively regulates mTor activity. Promotes, in an energy-dependent manner, the assembly of the TTT complex and the RUVBL complex composed of pont and rept into the TTT-RUVBL complex. This leads to dimerization of the mTORC1 complex and its subsequent activation. May negatively regulate the ubiquitin proteasome pathway. Required for habituation, a form of non-associative learning. The protein is WW domain-containing adapter protein with coiled-coil homolog of Drosophila melanogaster (Fruit fly).